A 344-amino-acid polypeptide reads, in one-letter code: Biotin synthase (344 aa).

Residues 65–290 (PEVEVEGIIS…RTMLRFAGGR (226 aa)) enclose the Radical SAM core domain. Residues Cys-80, Cys-84, and Cys-87 each coordinate [4Fe-4S] cluster. Positions 123, 156, 215, and 285 each coordinate [2Fe-2S] cluster.

Belongs to the radical SAM superfamily. Biotin synthase family. As to quaternary structure, homodimer. [4Fe-4S] cluster is required as a cofactor. The cofactor is [2Fe-2S] cluster.

It catalyses the reaction (4R,5S)-dethiobiotin + (sulfur carrier)-SH + 2 reduced [2Fe-2S]-[ferredoxin] + 2 S-adenosyl-L-methionine = (sulfur carrier)-H + biotin + 2 5'-deoxyadenosine + 2 L-methionine + 2 oxidized [2Fe-2S]-[ferredoxin]. It participates in cofactor biosynthesis; biotin biosynthesis; biotin from 7,8-diaminononanoate: step 2/2. Functionally, catalyzes the conversion of dethiobiotin (DTB) to biotin by the insertion of a sulfur atom into dethiobiotin via a radical-based mechanism. This chain is Biotin synthase, found in Mycolicibacterium paratuberculosis (strain ATCC BAA-968 / K-10) (Mycobacterium paratuberculosis).